Here is a 268-residue protein sequence, read N- to C-terminus: Centromere protein Q (268 aa).

The tract at residues 1-31 (MSGKANASKKNFEQLKRNPKRKKDNEEVVLS) is disordered. At Ser-31 the chain carries Phosphoserine. Residues 170 to 203 (ELMTGNIQSLKNKIQILASEVEEEEERVKQIHQI) adopt a coiled-coil conformation. A Phosphoserine modification is found at Ser-249.

The protein belongs to the CENP-Q/OKP1 family. In terms of assembly, component of the CENPA-CAD complex, composed of CENPI, CENPK, CENPL, CENPO, CENPP, CENPQ, CENPR and CENPS. The CENPA-CAD complex interacts with the CENPA-NAC complex, at least composed of CENPA, CENPC, CENPH, CENPM, CENPN, CENPT and CENPU.

The protein resides in the nucleus. It is found in the chromosome. Its subcellular location is the centromere. Component of the CENPA-CAD (nucleosome distal) complex, a complex recruited to centromeres which is involved in assembly of kinetochore proteins, mitotic progression and chromosome segregation. May be involved in incorporation of newly synthesized CENPA into centromeres via its interaction with the CENPA-NAC complex. Plays an important role in chromosome congression and in the recruitment of CENP-O complex (which comprises CENPO, CENPP, CENPQ and CENPU), CENPE and PLK1 to the kinetochores. This is Centromere protein Q (CENPQ) from Macaca fascicularis (Crab-eating macaque).